Reading from the N-terminus, the 282-residue chain is U1 small nuclear ribonucleoprotein A (282 aa).

N-acetylalanine is present on Ala2. In terms of domain architecture, RRM 1 spans His10 to Thr89. The residue at position 60 (Lys60) is an N6-acetyllysine. Residues Phe101–Val141 are disordered. Low complexity predominate over residues Pro119 to Val141. Omega-N-methylarginine is present on Arg152. Residues His208 to Lys282 form the RRM 2 domain.

This sequence belongs to the RRM U1 A/B'' family. U1 snRNP is composed of the 7 core Sm proteins SNRPB, SNRPD1, SNRPD2, SNRPD3, SNRPE, SNRPF and SNRPG that assemble in a heptameric protein ring on the Sm site of the small nuclear RNA to form the core snRNP, and at least three U1 snRNP-specific proteins SNRNP70/U1-70K, SNRPA/U1-A and SNRPC/U1-C. Interacts with SFPQ; component of a snRNP-free complex with SFPQ.

It is found in the nucleus. Component of the spliceosomal U1 snRNP, which is essential for recognition of the pre-mRNA 5' splice-site and the subsequent assembly of the spliceosome. U1 snRNP is the first snRNP to interact with pre-mRNA. This interaction is required for the subsequent binding of U2 snRNP and the U4/U6/U5 tri-snRNP. SNRPA binds stem loop II of U1 snRNA. In a snRNP-free form (SF-A) may be involved in coupled pre-mRNA splicing and polyadenylation process. May bind preferentially to the 5'-UGCAC-3' motif on RNAs. The sequence is that of U1 small nuclear ribonucleoprotein A (SNRPA) from Bos taurus (Bovine).